The primary structure comprises 182 residues: Meiotically up-regulated gene 82 protein (182 aa).

The segment at 161–182 (EKRLSEKKYKQKKKTQRRITMD) is disordered. Basic residues predominate over residues 169–182 (YKQKKKTQRRITMD).

It belongs to the prokaryotic/mitochondrial release factor family.

It localises to the mitochondrion. Has a role in meiosis. This chain is Meiotically up-regulated gene 82 protein (mug82), found in Schizosaccharomyces pombe (strain 972 / ATCC 24843) (Fission yeast).